Here is a 113-residue protein sequence, read N- to C-terminus: T cell receptor alpha variable 5 (113 aa).

A signal peptide spans Met1–Gly22. In terms of domain architecture, Ig-like spans Glu23 to Ser113. A glycan (N-linked (GlcNAc...) asparagine) is linked at Asn42. A disulfide bond links Cys43 and Cys110.

In terms of assembly, alpha-beta TR is a heterodimer composed of an alpha and beta chain; disulfide-linked. The alpha-beta TR is associated with the transmembrane signaling CD3 coreceptor proteins to form the TR-CD3 (TcR or TCR). The assembly of alpha-beta TR heterodimers with CD3 occurs in the endoplasmic reticulum where a single alpha-beta TR heterodimer associates with one CD3D-CD3E heterodimer, one CD3G-CD3E heterodimer and one CD247 homodimer forming a stable octameric structure. CD3D-CD3E and CD3G-CD3E heterodimers preferentially associate with TR alpha and TR beta chains, respectively. The association of the CD247 homodimer is the last step of TcR assembly in the endoplasmic reticulum and is required for transport to the cell surface.

It is found in the cell membrane. In terms of biological role, v region of the variable domain of T cell receptor (TR) alpha chain that participates in the antigen recognition. Alpha-beta T cell receptors are antigen specific receptors which are essential to the immune response and are present on the cell surface of T lymphocytes. Recognize peptide-major histocompatibility (MH) (pMH) complexes that are displayed by antigen presenting cells (APC), a prerequisite for efficient T cell adaptive immunity against pathogens. Binding of alpha-beta TR to pMH complex initiates TR-CD3 clustering on the cell surface and intracellular activation of LCK that phosphorylates the ITAM motifs of CD3G, CD3D, CD3E and CD247 enabling the recruitment of ZAP70. In turn ZAP70 phosphorylates LAT, which recruits numerous signaling molecules to form the LAT signalosome. The LAT signalosome propagates signal branching to three major signaling pathways, the calcium, the mitogen-activated protein kinase (MAPK) kinase and the nuclear factor NF-kappa-B (NF-kB) pathways, leading to the mobilization of transcription factors that are critical for gene expression and essential for T cell growth and differentiation. The T cell repertoire is generated in the thymus, by V-(D)-J rearrangement. This repertoire is then shaped by intrathymic selection events to generate a peripheral T cell pool of self-MH restricted, non-autoaggressive T cells. Post-thymic interaction of alpha-beta TR with the pMH complexes shapes TR structural and functional avidity. In Homo sapiens (Human), this protein is T cell receptor alpha variable 5.